The primary structure comprises 417 residues: NADH-quinone oxidoreductase subunit D (417 aa).

The protein belongs to the complex I 49 kDa subunit family. In terms of assembly, NDH-1 is composed of 14 different subunits. Subunits NuoB, C, D, E, F, and G constitute the peripheral sector of the complex.

Its subcellular location is the cell inner membrane. The catalysed reaction is a quinone + NADH + 5 H(+)(in) = a quinol + NAD(+) + 4 H(+)(out). NDH-1 shuttles electrons from NADH, via FMN and iron-sulfur (Fe-S) centers, to quinones in the respiratory chain. The immediate electron acceptor for the enzyme in this species is believed to be ubiquinone. Couples the redox reaction to proton translocation (for every two electrons transferred, four hydrogen ions are translocated across the cytoplasmic membrane), and thus conserves the redox energy in a proton gradient. The polypeptide is NADH-quinone oxidoreductase subunit D (Leptothrix cholodnii (strain ATCC 51168 / LMG 8142 / SP-6) (Leptothrix discophora (strain SP-6))).